A 410-amino-acid chain; its full sequence is Serine hydroxymethyltransferase (410 aa).

(6S)-5,6,7,8-tetrahydrofolate is bound by residues Leu-119 and 123 to 125 (GHL). At Lys-228 the chain carries N6-(pyridoxal phosphate)lysine. Residue 351–353 (SPF) coordinates (6S)-5,6,7,8-tetrahydrofolate.

Belongs to the SHMT family. As to quaternary structure, homodimer. Pyridoxal 5'-phosphate is required as a cofactor.

It is found in the cytoplasm. It carries out the reaction (6R)-5,10-methylene-5,6,7,8-tetrahydrofolate + glycine + H2O = (6S)-5,6,7,8-tetrahydrofolate + L-serine. It participates in one-carbon metabolism; tetrahydrofolate interconversion. The protein operates within amino-acid biosynthesis; glycine biosynthesis; glycine from L-serine: step 1/1. Functionally, catalyzes the reversible interconversion of serine and glycine with tetrahydrofolate (THF) serving as the one-carbon carrier. This reaction serves as the major source of one-carbon groups required for the biosynthesis of purines, thymidylate, methionine, and other important biomolecules. Also exhibits THF-independent aldolase activity toward beta-hydroxyamino acids, producing glycine and aldehydes, via a retro-aldol mechanism. This Alkaliphilus metalliredigens (strain QYMF) protein is Serine hydroxymethyltransferase.